The chain runs to 397 residues: Acetate kinase 2 (397 aa).

N8 provides a ligand contact to Mg(2+). Position 15 (K15) interacts with ATP. Substrate is bound at residue R89. The active-site Proton donor/acceptor is D146. Residues 206 to 210, 281 to 283, and 329 to 333 contribute to the ATP site; these read HLGNG, DFR, and GVGEN. E380 contributes to the Mg(2+) binding site.

It belongs to the acetokinase family. As to quaternary structure, homodimer. Requires Mg(2+) as cofactor. Mn(2+) serves as cofactor.

It is found in the cytoplasm. The catalysed reaction is acetate + ATP = acetyl phosphate + ADP. The protein operates within metabolic intermediate biosynthesis; acetyl-CoA biosynthesis; acetyl-CoA from acetate: step 1/2. In terms of biological role, catalyzes the formation of acetyl phosphate from acetate and ATP. Can also catalyze the reverse reaction. The chain is Acetate kinase 2 from Listeria monocytogenes serovar 1/2a (strain ATCC BAA-679 / EGD-e).